The primary structure comprises 391 residues: 3-ketoacyl-CoA thiolase (391 aa).

Cysteine 95 functions as the Acyl-thioester intermediate in the catalytic mechanism. Residues histidine 347 and cysteine 377 each act as proton acceptor in the active site.

Belongs to the thiolase-like superfamily. Thiolase family. Heterotetramer of two alpha chains (FadB) and two beta chains (FadA).

The protein resides in the cytoplasm. The enzyme catalyses an acyl-CoA + acetyl-CoA = a 3-oxoacyl-CoA + CoA. Its pathway is lipid metabolism; fatty acid beta-oxidation. Catalyzes the final step of fatty acid oxidation in which acetyl-CoA is released and the CoA ester of a fatty acid two carbons shorter is formed. The protein is 3-ketoacyl-CoA thiolase of Marinomonas sp. (strain MWYL1).